The sequence spans 381 residues: Chorismate synthase (381 aa).

2 residues coordinate NADP(+): R41 and R47. FMN is bound by residues 127–129, 247–248, G291, 306–310, and R332; these read RAS, QA, and KPIPT.

This sequence belongs to the chorismate synthase family. In terms of assembly, homotetramer. Requires FMNH2 as cofactor.

The enzyme catalyses 5-O-(1-carboxyvinyl)-3-phosphoshikimate = chorismate + phosphate. It participates in metabolic intermediate biosynthesis; chorismate biosynthesis; chorismate from D-erythrose 4-phosphate and phosphoenolpyruvate: step 7/7. Functionally, catalyzes the anti-1,4-elimination of the C-3 phosphate and the C-6 proR hydrogen from 5-enolpyruvylshikimate-3-phosphate (EPSP) to yield chorismate, which is the branch point compound that serves as the starting substrate for the three terminal pathways of aromatic amino acid biosynthesis. This reaction introduces a second double bond into the aromatic ring system. This chain is Chorismate synthase, found in Anaeromyxobacter sp. (strain K).